The following is a 189-amino-acid chain: MARSFSLLMVVLVLSYKSICSLGCDLPQTHSLRNRRALILLAQMGRISPFSCLKDRHEFRFPEEEFDGHQFQKTQAISVLHEMIQQTFNLFSTEDSSAAWEQSLLEKFSTELYQQLNDLEACVIQEVGVEETPLMNEDFILAVRKYFQRITLYLMEKKYSPCAWEVVRAEIMRSFSFSTNLKKGLRRKD.

Positions Met-1 to Gly-23 are cleaved as a signal peptide. Intrachain disulfides connect Cys-24–Cys-122 and Cys-52–Cys-162.

It belongs to the alpha/beta interferon family.

The protein localises to the secreted. Functionally, produced by macrophages, IFN-alpha have antiviral activities. Interferon stimulates the production of two enzymes: a protein kinase and an oligoadenylate synthetase. The polypeptide is Interferon alpha-7 (IFNA7) (Homo sapiens (Human)).